The primary structure comprises 241 residues: MIKLEKVSFTYKNRAALCDVNVDINEGEAVAIIGPNGSGKSTFLKVLNGILFPSSGRYVFDNNEINENTLKNNKFLKLFHKRVGFVFQNSDAQLFCSTVFDEVAFGIMQMGLEGEEVDKRVRDCLKLLNIEKLKEEHPYNLSGGEKKRVAIASVLAMNPEVITLDEPMNAIDPKGKRFLKELLIDLNKSGKTIICATHDFEYIEGVFNRAVVFSENHKIIRDDRYENIISDREFLMECNII.

The ABC transporter domain occupies 2–241; that stretch reads IKLEKVSFTY…REFLMECNII (240 aa). Residue 34–41 coordinates ATP; sequence GPNGSGKS.

This sequence belongs to the ABC transporter superfamily.

The protein localises to the cell membrane. In terms of biological role, probably part of an ABC transporter complex. Responsible for energy coupling to the transport system. This is Putative ABC transporter ATP-binding protein CA_C0773 from Clostridium acetobutylicum (strain ATCC 824 / DSM 792 / JCM 1419 / IAM 19013 / LMG 5710 / NBRC 13948 / NRRL B-527 / VKM B-1787 / 2291 / W).